Reading from the N-terminus, the 297-residue chain is Small ribosomal subunit protein uS2 (297 aa).

The interval 252-297 (GVPGTAFSAATAAPTSWEADGGDWAASSAAPAGESWAETQPAEAKW) is disordered. The segment covering 256 to 289 (TAFSAATAAPTSWEADGGDWAASSAAPAGESWAE) has biased composition (low complexity).

This sequence belongs to the universal ribosomal protein uS2 family. Component of the small ribosomal subunit. Mature ribosomes consist of a small (40S) and a large (60S) subunit. The 40S subunit contains about 33 different proteins and 1 molecule of RNA (18S). The 60S subunit contains about 49 different proteins and 3 molecules of RNA (25S, 5.8S and 5S). Interacts with rps21.

The protein resides in the cytoplasm. Functionally, required for the assembly and/or stability of the 40S ribosomal subunit. Required for the processing of the 20S rRNA-precursor to mature 18S rRNA in a late step of the maturation of 40S ribosomal subunits. The polypeptide is Small ribosomal subunit protein uS2 (rps0) (Aspergillus fumigatus (strain CBS 144.89 / FGSC A1163 / CEA10) (Neosartorya fumigata)).